Reading from the N-terminus, the 154-residue chain is Superoxide dismutase [Cu-Zn] (154 aa).

Residues H47, H49, and H64 each contribute to the Cu cation site. A disulfide bond links C58 and C147. Positions 64, 72, 81, and 84 each coordinate Zn(2+). H121 serves as a coordination point for Cu cation. Basic and acidic residues predominate over residues 125–137 (DDLGRSEHPESKK). The disordered stretch occupies residues 125–144 (DDLGRSEHPESKKTGNAGAR). R144 is a substrate binding site.

Belongs to the Cu-Zn superoxide dismutase family. In terms of assembly, homodimer. Cu cation serves as cofactor. Zn(2+) is required as a cofactor.

The protein resides in the cytoplasm. The enzyme catalyses 2 superoxide + 2 H(+) = H2O2 + O2. Destroys radicals which are normally produced within the cells and which are toxic to biological systems. This Aspergillus oryzae (strain ATCC 42149 / RIB 40) (Yellow koji mold) protein is Superoxide dismutase [Cu-Zn] (sodC).